Consider the following 99-residue polypeptide: MTLFSSISSISNPMTSSKSSISSFGSGTSMGSNTVACGGGCGGSGGILGLGLGLGLGLDLTGGSRSRGACGGNGGNRGNGNGGMGGGNGPCCGGCCCGI.

The segment at 1–29 is disordered; sequence MTLFSSISSISNPMTSSKSSISSFGSGTS.

The protein belongs to the hssA/B family.

The sequence is that of HssA/B-like protein 41 (hssl41) from Dictyostelium discoideum (Social amoeba).